Here is a 517-residue protein sequence, read N- to C-terminus: MSQFMIRYQIINLSKVFNSPKSLNFIKRYTTSTASTTTTTTNDDSNWISTPNITVCGIGGGGCNSVNNMINKELYGIDFVVANTDAQALAISCSRKMVQLGKTLTRGLGAGAVPEVGKKATEESIEELMNQIGDTQMLFVTAGMGGGTGTGGAAVIASAAKAKGILTVGIVTKPFHFEGKHRMKLAEQGLIELEKSVDSLIVIPNEKLMEQSQELYIGNAFQMVDDVLYNSIRGISDILVKPGLINLDFADVRSIMCNSGKALMGVGEGEGKGRDAIAANIALNNPLLENINISGAKGVLLNIAGSDLKLQEVDHIVSLVSSKVDPSANIIFGSTFDQQLEGKIRVTLIVTGMDQLIQQQQQQQKQTKIESQVEQKLHSTTIVDQELKPIEPQKSIIIEEEQEEQQQPKPIIPGIFVEQELLTTTTTANITPSQQKQESLTQNNIFSPPQQQQQQPSINLQPNYQQLYQQLYQQQQQQLQQQQPISFLKRLSNLFFTNGNNNKPYNNNKNTPGSNYE.

GTP contacts are provided by residues 60 to 64 (GGGCN), 147 to 149 (GTG), Glu178, Arg182, and Asp225. Residues 496 to 517 (FTNGNNNKPYNNNKNTPGSNYE) form a disordered region. Residues 497–517 (TNGNNNKPYNNNKNTPGSNYE) show a composition bias toward low complexity.

It belongs to the FtsZ family.

The protein resides in the mitochondrion matrix. Its function is as follows. Probably involved in mitochondrion division process. When overexpressed, induces mitochondrial tubule formation. Binds to and hydrolyzes GTP. The protein is Mitochondrial division protein fszA (fszA) of Dictyostelium discoideum (Social amoeba).